A 256-amino-acid chain; its full sequence is Leucyl/phenylalanyl-tRNA--protein transferase (256 aa).

Positions 1–21 (MIPWLPDDSDSAPFPPTRLAL) are disordered.

Belongs to the L/F-transferase family.

It is found in the cytoplasm. The catalysed reaction is N-terminal L-lysyl-[protein] + L-leucyl-tRNA(Leu) = N-terminal L-leucyl-L-lysyl-[protein] + tRNA(Leu) + H(+). It catalyses the reaction N-terminal L-arginyl-[protein] + L-leucyl-tRNA(Leu) = N-terminal L-leucyl-L-arginyl-[protein] + tRNA(Leu) + H(+). The enzyme catalyses L-phenylalanyl-tRNA(Phe) + an N-terminal L-alpha-aminoacyl-[protein] = an N-terminal L-phenylalanyl-L-alpha-aminoacyl-[protein] + tRNA(Phe). Functionally, functions in the N-end rule pathway of protein degradation where it conjugates Leu, Phe and, less efficiently, Met from aminoacyl-tRNAs to the N-termini of proteins containing an N-terminal arginine or lysine. In Leptothrix cholodnii (strain ATCC 51168 / LMG 8142 / SP-6) (Leptothrix discophora (strain SP-6)), this protein is Leucyl/phenylalanyl-tRNA--protein transferase.